A 156-amino-acid polypeptide reads, in one-letter code: Putative HTH-type transcriptional regulator BadM (156 aa).

The HTH rrf2-type domain maps to 4-130 (RLQKSTMCGL…RSVSITSLLK (127 aa)). Residues 136–156 (RRKTERGPNGASARHSSAGRA) are disordered. Residues 145–156 (GASARHSSAGRA) show a composition bias toward low complexity.

The chain is Putative HTH-type transcriptional regulator BadM (badM) from Rhodopseudomonas palustris (strain ATCC BAA-98 / CGA009).